Here is a 139-residue protein sequence, read N- to C-terminus: Nucleoside diphosphate kinase (139 aa).

6 residues coordinate ATP: Lys-11, Phe-59, Arg-87, Thr-93, Arg-104, and Asn-114. Residue His-117 is the Pros-phosphohistidine intermediate of the active site.

This sequence belongs to the NDK family. As to quaternary structure, homotetramer. The cofactor is Mg(2+).

It is found in the cytoplasm. The catalysed reaction is a 2'-deoxyribonucleoside 5'-diphosphate + ATP = a 2'-deoxyribonucleoside 5'-triphosphate + ADP. It catalyses the reaction a ribonucleoside 5'-diphosphate + ATP = a ribonucleoside 5'-triphosphate + ADP. Major role in the synthesis of nucleoside triphosphates other than ATP. The ATP gamma phosphate is transferred to the NDP beta phosphate via a ping-pong mechanism, using a phosphorylated active-site intermediate. The protein is Nucleoside diphosphate kinase of Moorella thermoacetica (strain ATCC 39073 / JCM 9320).